A 380-amino-acid polypeptide reads, in one-letter code: Chaperone protein DnaJ (380 aa).

One can recognise a J domain in the interval 5-70; that stretch reads DYYEVLGVSK…QKRQTYDQYG (66 aa). A CR-type zinc finger spans residues 136-214; sequence GKEVEIKIPT…CHGQGRVEKT (79 aa). Zn(2+) is bound by residues Cys-149, Cys-152, Cys-166, Cys-169, Cys-188, Cys-191, Cys-202, and Cys-205. CXXCXGXG motif repeat units follow at residues 149–156, 166–173, 188–195, and 202–209; these read CDPCDGSG, CTTCHGAG, CPTCQGQG, and CDSCHGQG.

It belongs to the DnaJ family. In terms of assembly, homodimer. It depends on Zn(2+) as a cofactor.

Its subcellular location is the cytoplasm. Functionally, participates actively in the response to hyperosmotic and heat shock by preventing the aggregation of stress-denatured proteins and by disaggregating proteins, also in an autonomous, DnaK-independent fashion. Unfolded proteins bind initially to DnaJ; upon interaction with the DnaJ-bound protein, DnaK hydrolyzes its bound ATP, resulting in the formation of a stable complex. GrpE releases ADP from DnaK; ATP binding to DnaK triggers the release of the substrate protein, thus completing the reaction cycle. Several rounds of ATP-dependent interactions between DnaJ, DnaK and GrpE are required for fully efficient folding. Also involved, together with DnaK and GrpE, in the DNA replication of plasmids through activation of initiation proteins. The sequence is that of Chaperone protein DnaJ from Pseudoalteromonas translucida (strain TAC 125).